The primary structure comprises 624 residues: NADPH-dependent diflavin oxidoreductase 1 (624 aa).

One can recognise a Flavodoxin-like domain in the interval 6 to 168 (IVILYGSETG…VYYEFEKRII (163 aa)). Residues 12-17 (SETGNA), 59-62 (STTG), 106-115 (LGDSSYPRFN), and Glu142 each bind FMN. In terms of domain architecture, FAD-binding FR-type spans 226–474 (ETIRHGTVKK…LQNNHLLHED (249 aa)). Residues Arg384, 414–417 (RFYS), and 446–449 (GLCT) each bind FAD. NADP(+)-binding positions include 539–540 (SR) and 548–552 (AKYVQ). Trp624 contacts FAD.

Belongs to the NADPH-dependent diflavin oxidoreductase NDOR1 family. It in the N-terminal section; belongs to the flavodoxin family. This sequence in the C-terminal section; belongs to the flavoprotein pyridine nucleotide cytochrome reductase family. As to quaternary structure, interacts with DRE2; as part of the cytosolic iron-sulfur (Fe-S) protein assembly (CIA) machinery. FAD serves as cofactor. It depends on FMN as a cofactor.

Its subcellular location is the cytoplasm. It is found in the mitochondrion. It catalyses the reaction 2 oxidized [2Fe-2S]-[protein] + NADPH = 2 reduced [2Fe-2S]-[protein] + NADP(+) + H(+). Functionally, NADPH-dependent reductase which is a central component of the cytosolic iron-sulfur (Fe-S) protein assembly (CIA) machinery. Transfers electrons from NADPH via its FAD and FMN prosthetic groups to the [2Fe-2S] cluster of DRE2, another key component of the CIA machinery. In turn, this reduced cluster provides electrons for assembly of cytosolic iron-sulfur cluster proteins. Positively controls H(2)O(2)-induced cell death. The sequence is that of NADPH-dependent diflavin oxidoreductase 1 from Kluyveromyces lactis (strain ATCC 8585 / CBS 2359 / DSM 70799 / NBRC 1267 / NRRL Y-1140 / WM37) (Yeast).